The chain runs to 177 residues: ATP-dependent protease subunit HslV (177 aa).

Threonine 7 is an active-site residue. Residues glycine 162, cysteine 165, and threonine 168 each contribute to the Na(+) site.

The protein belongs to the peptidase T1B family. HslV subfamily. As to quaternary structure, a double ring-shaped homohexamer of HslV is capped on each side by a ring-shaped HslU homohexamer. The assembly of the HslU/HslV complex is dependent on binding of ATP.

It is found in the cytoplasm. It carries out the reaction ATP-dependent cleavage of peptide bonds with broad specificity.. With respect to regulation, allosterically activated by HslU binding. In terms of biological role, protease subunit of a proteasome-like degradation complex believed to be a general protein degrading machinery. The polypeptide is ATP-dependent protease subunit HslV (Persephonella marina (strain DSM 14350 / EX-H1)).